Reading from the N-terminus, the 224-residue chain is Putative MgpC-like protein MPN_150 (224 aa).

The protein belongs to the MgpC family.

The polypeptide is Putative MgpC-like protein MPN_150 (Mycoplasma pneumoniae (strain ATCC 29342 / M129 / Subtype 1) (Mycoplasmoides pneumoniae)).